We begin with the raw amino-acid sequence, 258 residues long: Thrombin-like enzyme saxthrombin (258 aa).

Residues 1-18 form the signal peptide; it reads MVLIRVLANLLILQLSYA. The propeptide occupies 19 to 24; sequence QKSSEL. Positions 25 to 249 constitute a Peptidase S1 domain; that stretch reads VIGGDECNIN…YNHWIQSIIA (225 aa). 6 disulfides stabilise this stretch: Cys31-Cys163, Cys50-Cys66, Cys98-Cys256, Cys142-Cys210, Cys174-Cys189, and Cys200-Cys225. Residue Asn44 is glycosylated (N-linked (GlcNAc...) asparagine). Catalysis depends on charge relay system residues His65 and Asp110. Residue Ser204 is the Charge relay system of the active site. The N-linked (GlcNAc...) asparagine glycan is linked to Asn251.

It belongs to the peptidase S1 family. Snake venom subfamily. In terms of assembly, monomer. In terms of tissue distribution, expressed by the venom gland.

The protein resides in the secreted. Thrombin-like snake venom serine protease that shows strong blood coagulation activity in vitro. The polypeptide is Thrombin-like enzyme saxthrombin (Gloydius intermedius (Central Asian pit viper)).